Consider the following 144-residue polypeptide: Large ribosomal subunit protein uL11 (144 aa).

Belongs to the universal ribosomal protein uL11 family. Part of the ribosomal stalk of the 50S ribosomal subunit. Interacts with L10 and the large rRNA to form the base of the stalk. L10 forms an elongated spine to which L12 dimers bind in a sequential fashion forming a multimeric L10(L12)X complex. Post-translationally, one or more lysine residues are methylated.

Functionally, forms part of the ribosomal stalk which helps the ribosome interact with GTP-bound translation factors. In Legionella pneumophila (strain Paris), this protein is Large ribosomal subunit protein uL11.